The sequence spans 91 residues: Small ribosomal subunit protein bS20 (91 aa).

Residues 1–23 (MANTSSAKKATRKIARRTEVNKA) are disordered.

The protein belongs to the bacterial ribosomal protein bS20 family.

Functionally, binds directly to 16S ribosomal RNA. This is Small ribosomal subunit protein bS20 from Rhizobium rhizogenes (strain K84 / ATCC BAA-868) (Agrobacterium radiobacter).